Reading from the N-terminus, the 151-residue chain is Arginine repressor (151 aa).

The protein belongs to the ArgR family.

The protein localises to the cytoplasm. It participates in amino-acid biosynthesis; L-arginine biosynthesis [regulation]. In terms of biological role, regulates arginine biosynthesis genes. The sequence is that of Arginine repressor from Clostridium novyi (strain NT).